Reading from the N-terminus, the 299-residue chain is Single myb histone 1 (299 aa).

Residues 1–61 form the HTH myb-type domain; the sequence is MGAPKQRWTP…KWRNLSVTAG (61 aa). A DNA-binding region (H-T-H motif) is located at residues 28-57; that stretch reads WRTILRDSDFSALLRLRSNVDLKDKWRNLS. One can recognise an H15 domain in the interval 124-192; it reads SVARLDDLIL…KVNQKYRIAP (69 aa). A coiled-coil region spans residues 238–279; that stretch reads EEAAAFAAKAVAEAEVAIAEAEEAARVAEAAENDAEAAKAFL.

It belongs to the histone H1/H5 family. SMH subfamily. In terms of assembly, forms a homodimer and heterodimers. Expressed in leaves.

It is found in the nucleus. It localises to the chromosome. The protein resides in the nucleolus. The protein localises to the telomere. In terms of biological role, binds preferentially double-stranded telomeric repeats 5'-TTTAGGG-3', but can also bind to the single G-rich and C-rich telomeric strand. The sequence is that of Single myb histone 1 (SMH1) from Zea mays (Maize).